A 286-amino-acid chain; its full sequence is Simplagrin (286 aa).

An N-terminal signal peptide occupies residues 1–20 (MKKFCLIFLLLALTALHVKG). The disordered stretch occupies residues 17 to 179 (HVKGSPIPDE…GSSSGGEESA (163 aa)). Acidic residues-rich tracts occupy residues 24 to 69 (PDEE…DGQE) and 103 to 129 (VESG…TGGE). A glycan (N-linked (GlcNAc...) asparagine) is linked at N116. Residues 166 to 177 (SNRAGSSSGGEE) are compositionally biased toward low complexity.

Belongs to the aegyptin family. As to quaternary structure, monomeric in solution; likely has an elongated non-globular form. Interacts with human and rat collagens (via a RGQOGVMGF peptide, where O is hydroxyproline). Not glycosylated. Salivary gland.

Its subcellular location is the secreted. Inhibits host platelet aggregation induced by low concentrations of collagen via blocking the von Willebrand Factor (VWF) interaction with collagen. The protein is Simplagrin of Simulium nigrimanum (Black fly).